Here is a 278-residue protein sequence, read N- to C-terminus: 4-diphosphocytidyl-2-C-methyl-D-erythritol kinase (278 aa).

K9 is an active-site residue. Position 93–103 (93–103 (PLGGGLGGGSS)) interacts with ATP. D135 is a catalytic residue.

Belongs to the GHMP kinase family. IspE subfamily.

It carries out the reaction 4-CDP-2-C-methyl-D-erythritol + ATP = 4-CDP-2-C-methyl-D-erythritol 2-phosphate + ADP + H(+). It functions in the pathway isoprenoid biosynthesis; isopentenyl diphosphate biosynthesis via DXP pathway; isopentenyl diphosphate from 1-deoxy-D-xylulose 5-phosphate: step 3/6. Its function is as follows. Catalyzes the phosphorylation of the position 2 hydroxy group of 4-diphosphocytidyl-2C-methyl-D-erythritol. This chain is 4-diphosphocytidyl-2-C-methyl-D-erythritol kinase, found in Nitrosomonas eutropha (strain DSM 101675 / C91 / Nm57).